Reading from the N-terminus, the 328-residue chain is Methionyl-tRNA formyltransferase (328 aa).

110-113 is a (6S)-5,6,7,8-tetrahydrofolate binding site; sequence SLLP.

This sequence belongs to the Fmt family.

The catalysed reaction is L-methionyl-tRNA(fMet) + (6R)-10-formyltetrahydrofolate = N-formyl-L-methionyl-tRNA(fMet) + (6S)-5,6,7,8-tetrahydrofolate + H(+). Its function is as follows. Attaches a formyl group to the free amino group of methionyl-tRNA(fMet). The formyl group appears to play a dual role in the initiator identity of N-formylmethionyl-tRNA by promoting its recognition by IF2 and preventing the misappropriation of this tRNA by the elongation apparatus. In Prochlorococcus marinus (strain MIT 9312), this protein is Methionyl-tRNA formyltransferase.